A 390-amino-acid polypeptide reads, in one-letter code: D-alanyl-D-alanine carboxypeptidase DacD (390 aa).

The signal sequence occupies residues 1–23 (MLLKRRLFIAASLFAMHLSPALA). The Acyl-ester intermediate role is filled by Ser-65. The active-site Proton acceptor is Lys-68. Residue Ser-131 is part of the active site. Lys-234 contributes to the substrate binding site.

Belongs to the peptidase S11 family.

The protein localises to the cell inner membrane. The catalysed reaction is Preferential cleavage: (Ac)2-L-Lys-D-Ala-|-D-Ala. Also transpeptidation of peptidyl-alanyl moieties that are N-acyl substituents of D-alanine.. The protein operates within cell wall biogenesis; peptidoglycan biosynthesis. In terms of biological role, removes C-terminal D-alanyl residues from sugar-peptide cell wall precursors. The protein is D-alanyl-D-alanine carboxypeptidase DacD (dacD) of Salmonella typhimurium (strain LT2 / SGSC1412 / ATCC 700720).